Consider the following 129-residue polypeptide: Follitropin subunit beta (129 aa).

Residues 1 to 20 (MKTLQFFFLFCCWKAICCNS) form the signal peptide. Disulfide bonds link Cys-21/Cys-69, Cys-35/Cys-84, Cys-38/Cys-122, Cys-46/Cys-100, Cys-50/Cys-102, and Cys-105/Cys-112. Residues Asn-25 and Asn-42 are each glycosylated (N-linked (GlcNAc...) asparagine).

The protein belongs to the glycoprotein hormones subunit beta family. Heterodimer. The active follitropin is a heterodimer composed of an alpha chain/CGA shared with other hormones and a unique beta chain/FSHB shown here.

The protein localises to the secreted. Together with the alpha chain CGA constitutes follitropin, the follicle-stimulating hormone, and provides its biological specificity to the hormone heterodimer. Binds FSHR, a G protein-coupled receptor, on target cells to activate downstream signaling pathways. Follitropin is involved in follicle development and spermatogenesis in reproductive organs. This Pan troglodytes (Chimpanzee) protein is Follitropin subunit beta (FSHB).